A 428-amino-acid chain; its full sequence is Putative gustatory receptor 2a (428 aa).

The Cytoplasmic segment spans residues 1–40 (MDTLRALEPLHRACQVCNLWPWRLAPPPDSEGILLRRSRW). Residues 41-61 (LELYGWTVLIAATSFTVYGLF) form a helical membrane-spanning segment. Over 62-145 (QESSVEEKQD…INMRRQTSRR (84 aa)) the chain is Extracellular. Residues 146–166 (AVWILWGYAVSQLLILGAKLL) traverse the membrane as a helical segment. Over 167 to 173 (SRGDRFP) the chain is Cytoplasmic. Residues 174–194 (IYWISYLLPLLVCGLRYFQIF) form a helical membrane-spanning segment. Asn195 carries an N-linked (GlcNAc...) asparagine glycan. The Extracellular segment spans residues 195–250 (NATQLVRQRLDVLLVALQQLQLHQKGPAVDTVLEEQEDLEEAAMDRLIAVRLVYQR). A helical transmembrane segment spans residues 251–271 (VWALVALLNRCYGLSMLMQVG). At 272–300 (NDFLAITSNCYWMFLNFRQSAASPFDILQ) the chain is on the cytoplasmic side. Residues 301 to 321 (IVASGVWSAPHLGNVLVLSLL) form a helical membrane-spanning segment. Residues 322–349 (CDRTAQCASRLALCLHQVSVDLRNESHN) lie on the Extracellular side of the membrane. The N-linked (GlcNAc...) asparagine glycan is linked to Asn345. The chain crosses the membrane as a helical span at residues 350–370 (ALVGTLVRYCAPLIILVPLQI). The Cytoplasmic portion of the chain corresponds to 371 to 395 (TQFSLQLLHQRLHFSAAGFFNVDCT). A helical membrane pass occupies residues 396–416 (LLYTIVGATTTYLIILIQFHM). Topologically, residues 417–428 (SESTIGSDSNGQ) are extracellular.

It belongs to the insect chemoreceptor superfamily. Gustatory receptor (GR) family. Gr2a subfamily. As to expression, expressed in neurons of the terminal external chemosensory organ, the dorsal external chemosensory organ, as well as in the dorsal pharyngeal sense organ of larvae.

The protein resides in the cell membrane. Probable gustatory receptor which mediates acceptance or avoidance behavior, depending on its not yet determined substrates. The protein is Putative gustatory receptor 2a (Gr2a) of Drosophila melanogaster (Fruit fly).